The sequence spans 394 residues: HORMA domain-containing protein 1 (394 aa).

The region spanning 24–226 (HQSLVLVKRL…TPFHIFKVKV (203 aa)) is the HORMA domain. The interval 252 to 394 (KILRDKDVED…RKFSEPKEHI (143 aa)) is disordered. Residues 253-282 (ILRDKDVEDEQEHYTSDDLDMETKMEEQEK) show a composition bias toward basic and acidic residues. Polar residues-rich tracts occupy residues 310–324 (LSISHSQVEQLVNKT) and 343–352 (KMANGNQPVK). Residues 362–374 (QHESGRRVLHHFD) show a composition bias toward basic and acidic residues. Ser-376 carries the post-translational modification Phosphoserine. The short motif at 383 to 386 (KRRK) is the Nuclear localization signal element.

Interacts with HORMAD2. Interacts with IHO1. Post-translationally, phosphorylated at Ser-377 in a SPO11-dependent manner.

Its subcellular location is the nucleus. The protein resides in the chromosome. Plays a key role in meiotic progression. Regulates 3 different functions during meiosis: ensures that sufficient numbers of processed DNA double-strand breaks (DSBs) are available for successful homology search by increasing the steady-state numbers of single-stranded DSB ends. Promotes synaptonemal-complex formation independently of its role in homology search. Plays a key role in the male mid-pachytene checkpoint and the female meiotic prophase checkpoint: required for efficient build-up of ATR activity on unsynapsed chromosome regions, a process believed to form the basis of meiotic silencing of unsynapsed chromatin (MSUC) and meiotic prophase quality control in both sexes. The chain is HORMA domain-containing protein 1 (HORMAD1) from Macaca fascicularis (Crab-eating macaque).